The sequence spans 362 residues: D-alanine--D-alanine ligase (362 aa).

The ATP-grasp domain maps to 141–346 (KNIFAEAGLN…YPELIEELIR (206 aa)). 174 to 229 (EEALGYPCFVKPANLGSSVGINKCKDREELEKAFEEAFQFDRKIIVEENIIGREVE) contacts ATP. Positions 300, 313, and 315 each coordinate Mg(2+).

It belongs to the D-alanine--D-alanine ligase family. Mg(2+) serves as cofactor. Requires Mn(2+) as cofactor.

The protein resides in the cytoplasm. The enzyme catalyses 2 D-alanine + ATP = D-alanyl-D-alanine + ADP + phosphate + H(+). It participates in cell wall biogenesis; peptidoglycan biosynthesis. Functionally, cell wall formation. This Bacillus cytotoxicus (strain DSM 22905 / CIP 110041 / 391-98 / NVH 391-98) protein is D-alanine--D-alanine ligase.